Consider the following 474-residue polypeptide: MFEVVIGLEVHTQLNTKTKIFCSCSTSFGDEANTHVCPTCLALPGALPVLNKEAVKKAISFGTAINAKINKKSVFNRKNYFYPDLPKAYQISQFEIPIVEGGELIIDVNGEKKRIGITRAHLEEDAGKNIHESDHSLVDLNRAGTPLLEIVSEPDLRSSDEAVAYLKKLHSILRFLNISDANMQEGSFRCDANVSIRPKGDSKLYTRVEIKNLNSFKFIQKAIDYEVERQSAAWEDGKYDEEVYQETRLFDTTNLVTRSMRGKEDSAEYRYFPDPDLLPVLVDKAMYDEAIKIPELADEKVVRYQKEFGVKEDDALNLVSTIEMSRYFEDLVNSKISPKLCVTWLLVELNGRLKNGVTIETSPINSAKMIEFLKRIEDGTISGKAGKEVLDYLMEHPSEDVDAVIEKLGLKQVSDDSAIVAIIDQILAANADKVAEYKAGKDKMFGFFVGQVMKEGKGAFNPAKVNELLKSRLA.

Belongs to the GatB/GatE family. GatB subfamily. In terms of assembly, heterotrimer of A, B and C subunits.

It catalyses the reaction L-glutamyl-tRNA(Gln) + L-glutamine + ATP + H2O = L-glutaminyl-tRNA(Gln) + L-glutamate + ADP + phosphate + H(+). It carries out the reaction L-aspartyl-tRNA(Asn) + L-glutamine + ATP + H2O = L-asparaginyl-tRNA(Asn) + L-glutamate + ADP + phosphate + 2 H(+). Functionally, allows the formation of correctly charged Asn-tRNA(Asn) or Gln-tRNA(Gln) through the transamidation of misacylated Asp-tRNA(Asn) or Glu-tRNA(Gln) in organisms which lack either or both of asparaginyl-tRNA or glutaminyl-tRNA synthetases. The reaction takes place in the presence of glutamine and ATP through an activated phospho-Asp-tRNA(Asn) or phospho-Glu-tRNA(Gln). This Campylobacter curvus (strain 525.92) protein is Aspartyl/glutamyl-tRNA(Asn/Gln) amidotransferase subunit B.